Here is a 414-residue protein sequence, read N- to C-terminus: Histidinol dehydrogenase (414 aa).

Residues tyrosine 116, glutamine 177, and asparagine 200 each coordinate NAD(+). Substrate-binding residues include threonine 223, glutamine 245, and histidine 248. 2 residues coordinate Zn(2+): glutamine 245 and histidine 248. Catalysis depends on proton acceptor residues glutamate 313 and histidine 314. The substrate site is built by histidine 314, aspartate 347, glutamate 401, and histidine 406. Residue aspartate 347 participates in Zn(2+) binding. Histidine 406 contributes to the Zn(2+) binding site.

Belongs to the histidinol dehydrogenase family. Requires Zn(2+) as cofactor.

It carries out the reaction L-histidinol + 2 NAD(+) + H2O = L-histidine + 2 NADH + 3 H(+). Its pathway is amino-acid biosynthesis; L-histidine biosynthesis; L-histidine from 5-phospho-alpha-D-ribose 1-diphosphate: step 9/9. Functionally, catalyzes the sequential NAD-dependent oxidations of L-histidinol to L-histidinaldehyde and then to L-histidine. This chain is Histidinol dehydrogenase, found in Staphylococcus epidermidis (strain ATCC 12228 / FDA PCI 1200).